The primary structure comprises 73 residues: Large ribosomal subunit protein bL31 (73 aa).

It belongs to the bacterial ribosomal protein bL31 family. Type A subfamily. Part of the 50S ribosomal subunit.

Functionally, binds the 23S rRNA. The sequence is that of Large ribosomal subunit protein bL31 from Sinorhizobium fredii (strain NBRC 101917 / NGR234).